Here is a 233-residue protein sequence, read N- to C-terminus: 2,3,4,5-tetrahydropyridine-2,6-dicarboxylate N-acetyltransferase (233 aa).

This sequence belongs to the transferase hexapeptide repeat family. DapH subfamily.

It catalyses the reaction (S)-2,3,4,5-tetrahydrodipicolinate + acetyl-CoA + H2O = L-2-acetamido-6-oxoheptanedioate + CoA. Its pathway is amino-acid biosynthesis; L-lysine biosynthesis via DAP pathway; LL-2,6-diaminopimelate from (S)-tetrahydrodipicolinate (acetylase route): step 1/3. Catalyzes the transfer of an acetyl group from acetyl-CoA to tetrahydrodipicolinate. This is 2,3,4,5-tetrahydropyridine-2,6-dicarboxylate N-acetyltransferase from Leuconostoc mesenteroides subsp. mesenteroides (strain ATCC 8293 / DSM 20343 / BCRC 11652 / CCM 1803 / JCM 6124 / NCDO 523 / NBRC 100496 / NCIMB 8023 / NCTC 12954 / NRRL B-1118 / 37Y).